A 375-amino-acid polypeptide reads, in one-letter code: Aminomethyltransferase (375 aa).

It belongs to the GcvT family. As to quaternary structure, the glycine cleavage system is composed of four proteins: P, T, L and H.

The enzyme catalyses N(6)-[(R)-S(8)-aminomethyldihydrolipoyl]-L-lysyl-[protein] + (6S)-5,6,7,8-tetrahydrofolate = N(6)-[(R)-dihydrolipoyl]-L-lysyl-[protein] + (6R)-5,10-methylene-5,6,7,8-tetrahydrofolate + NH4(+). Functionally, the glycine cleavage system catalyzes the degradation of glycine. In Ralstonia nicotianae (strain ATCC BAA-1114 / GMI1000) (Ralstonia solanacearum), this protein is Aminomethyltransferase.